A 464-amino-acid polypeptide reads, in one-letter code: Argininosuccinate lyase (464 aa).

This sequence belongs to the lyase 1 family. Argininosuccinate lyase subfamily.

The protein resides in the cytoplasm. It catalyses the reaction 2-(N(omega)-L-arginino)succinate = fumarate + L-arginine. It participates in amino-acid biosynthesis; L-arginine biosynthesis; L-arginine from L-ornithine and carbamoyl phosphate: step 3/3. This Herminiimonas arsenicoxydans protein is Argininosuccinate lyase.